We begin with the raw amino-acid sequence, 225 residues long: MLKQAGNQSFRPFISFAQKSLFNRQITGNHWIFARFKFYPLNKIVNYNHFHSSSCQSEAKNFYKQFEGDISDPPPKGPFDIDLGALKSSYLRKMKTLHPDVAQGKDAALAQRDSAELSKAYNTLKAPLTRAEYILQLQGINPVSEDISNSDPEFLMEIMDVHENISASRDSPEKLLQLSQENQGRKVQEINEIRKAMESSNWDSALLYVNRLRYWNTIDKILHDL.

The N-terminal 49 residues, Met-1–His-49, are a transit peptide targeting the mitochondrion. The region spanning Asn-61 to Leu-137 is the J domain. An HSP70 binding motif is present at residues His-98 to Asp-100.

It belongs to the HscB family. Interacts with ssc1.

It localises to the mitochondrion matrix. In terms of biological role, co-chaperone required for the assembly of iron-sulfur (Fe/S) clusters in mitochondria. Stimulates the ATPase activity of the mitochondrial Hsp70 chaperone ssc1, to mediate the transfer of iron-sulfur clusters from isu1 to grx5. The polypeptide is J-type co-chaperone jac1, mitochondrial (Schizosaccharomyces pombe (strain 972 / ATCC 24843) (Fission yeast)).